Consider the following 259-residue polypeptide: Hydroxyacylglutathione hydrolase (259 aa).

The Zn(2+) site is built by histidine 56, histidine 58, aspartate 60, histidine 61, histidine 112, aspartate 133, and histidine 171.

The protein belongs to the metallo-beta-lactamase superfamily. Glyoxalase II family. As to quaternary structure, monomer. Requires Zn(2+) as cofactor.

The enzyme catalyses an S-(2-hydroxyacyl)glutathione + H2O = a 2-hydroxy carboxylate + glutathione + H(+). It functions in the pathway secondary metabolite metabolism; methylglyoxal degradation; (R)-lactate from methylglyoxal: step 2/2. Its function is as follows. Thiolesterase that catalyzes the hydrolysis of S-D-lactoyl-glutathione to form glutathione and D-lactic acid. The chain is Hydroxyacylglutathione hydrolase from Pseudomonas putida (strain W619).